Reading from the N-terminus, the 417-residue chain is Gamma-glutamyl phosphate reductase (417 aa).

It belongs to the gamma-glutamyl phosphate reductase family.

Its subcellular location is the cytoplasm. The catalysed reaction is L-glutamate 5-semialdehyde + phosphate + NADP(+) = L-glutamyl 5-phosphate + NADPH + H(+). Its pathway is amino-acid biosynthesis; L-proline biosynthesis; L-glutamate 5-semialdehyde from L-glutamate: step 2/2. Its function is as follows. Catalyzes the NADPH-dependent reduction of L-glutamate 5-phosphate into L-glutamate 5-semialdehyde and phosphate. The product spontaneously undergoes cyclization to form 1-pyrroline-5-carboxylate. This is Gamma-glutamyl phosphate reductase from Serratia proteamaculans (strain 568).